The sequence spans 469 residues: MAAKLDSQLLGLVFQSRPDILKGIQEAADSPARIDLFNNIASFVYERIADNTSEEPATKRRRVEAQTSGPNGAAHPIAGSQAAVLGADAAAAEPVLLEIKDISVSVPQRKKYDLCFTKNFLYARASGSPVPVQGIVYPWKDIEHAFYLPVPDKSQVQHNYVLLPRNSYLPTTKSQQSADQQTQQQTSAPLEPLVFTIPSTAPKPGTITGPSAAAAAPVSDSYATLFHWALTTSLHAAGNHACELVSSDPKVFHSVARQAYRPQEKAVHVKAFRGSKDGFLFFLPTGILWGFKKPLLFLPLDKIVAISYTSVLQRTFNIVVELEGGGEGSEEGGQEIEFSMLDQEDYAGIDQSYVRRHGLADRSMAEQRKAKKQLAENAKKAAANGEEGEGGEGGEAGDGLTELERAQKEEEQRLQDEEDEEEEDYDPGSEGESEGSGSSSEEEEEEEDGEGEGDEDDDEDMGEGLEGEE.

Disordered regions lie at residues 54-73 and 364-469; these read EEPA…PNGA and MAEQ…EGEE. Composition is skewed to basic and acidic residues over residues 364–379 and 402–415; these read MAEQ…ENAK and ELER…QRLQ. Composition is skewed to acidic residues over residues 416–433 and 440–469; these read DEED…EGES and SEEE…EGEE.

The protein belongs to the RTT106 family. In terms of assembly, interacts with histones H3 and H4.

The protein resides in the nucleus. It localises to the chromosome. Its function is as follows. Histones H3 and H4 chaperone involved in the nucleosome formation and heterochromatin silencing. Required for the deposition of H3K56ac-carrying H3-H4 complex onto newly-replicated DNA. Plays a role in the transcriptional regulation of the cell-cycle dependent histone genes by creating a repressive structure at the core histone gene promoter. The protein is Histone chaperone rtt-106 (rtt-106) of Neurospora crassa (strain ATCC 24698 / 74-OR23-1A / CBS 708.71 / DSM 1257 / FGSC 987).